The chain runs to 205 residues: MVRVKICGITNLEDALFSVESGADAVGFVFYSKSKRYVSPEKAREISLNLPPFVFRVGVFVNESLESVLDIAFHAGLNAVQLHGDESVEFCERLNEKIMVIKAVGISEEQDVRRALEYRKFPVLLDTKVSGYGGSGKVFNWSVVLPYRDQFRYLILSGGLNPRNVERAIEMVRPFAVDVSSGVEISPGKKDHNLVREFIKKAKGL.

Belongs to the TrpF family.

The catalysed reaction is N-(5-phospho-beta-D-ribosyl)anthranilate = 1-(2-carboxyphenylamino)-1-deoxy-D-ribulose 5-phosphate. It participates in amino-acid biosynthesis; L-tryptophan biosynthesis; L-tryptophan from chorismate: step 3/5. The sequence is that of N-(5'-phosphoribosyl)anthranilate isomerase from Thermotoga neapolitana (strain ATCC 49049 / DSM 4359 / NBRC 107923 / NS-E).